Here is a 387-residue protein sequence, read N- to C-terminus: MSQQQTLPVTLPPALSQELLKTVPPPANTQQDQMKQPTPSPAPCQKGPSELPVEKHPAPVKQVPEQECEPQQQDHQEPELQLGRKQQEPQEQEVHPGKQQQKPQEQEAHLGKKQEPQGQEVHLGKQQQKTQEQEVHLGKQQQELQEQEVHLEKQLQEPQEVHLEKQLQEQEVHLEKQLQEPEPELNLGKQQQEPQEQEAYLGKQQQELPEPQDPELHLGKQQQEPQEQEVQLEKQQEAQEQELHLGKQQQESQEQELHLRKLQQVPQEPQDQELHLGKQQQELQEQEVHLGKQLQEPQEQELHLGRQQQELQEEEVHLGMKEEQLLKHVEQQEGQLEQQEGQLKQPVCIPTPGQVQDIQPAQPPKGEVLLPTEKQQKQEVQWPLKQE.

2 disordered regions span residues 1–319 (MSQQ…VHLG) and 347–387 (VCIP…LKQE). The span at 28–37 (NTQQDQMKQP) shows a compositional bias: polar residues. Residues 62–71 (QVPEQECEPQ) are compositionally biased toward low complexity. 4 stretches are compositionally biased toward basic and acidic residues: residues 85–96 (KQQEPQEQEVHP), 104–115 (QEQEAHLGKKQE), 147–179 (QEVHLEKQLQEPQEVHLEKQLQEQEVHLEKQLQ), and 231–245 (QLEKQQEAQEQELHL).

This sequence belongs to the involucrin family. Directly or indirectly cross-linked to cornifelin (CNFN). Substrate of transglutaminase. Specific glutamines or lysines are cross-linked to keratins, desmoplakin and to inter involucrin molecules. Keratinocytes of epidermis and other stratified squamous epithelia.

The protein localises to the cytoplasm. Functionally, part of the insoluble cornified cell envelope (CE) of stratified squamous epithelia. In Cephalopachus bancanus (Western tarsier), this protein is Involucrin (IVL).